The chain runs to 251 residues: Triosephosphate isomerase (251 aa).

9-11 contacts substrate; the sequence is NWK. The active-site Electrophile is the His95. The Proton acceptor role is filled by Glu167. Residues Gly173, Ser213, and 234–235 contribute to the substrate site; that span reads GG. Ser213 bears the Phosphoserine mark.

This sequence belongs to the triosephosphate isomerase family. In terms of assembly, homodimer.

It localises to the cytoplasm. It carries out the reaction D-glyceraldehyde 3-phosphate = dihydroxyacetone phosphate. Its pathway is carbohydrate biosynthesis; gluconeogenesis. It participates in carbohydrate degradation; glycolysis; D-glyceraldehyde 3-phosphate from glycerone phosphate: step 1/1. In terms of biological role, involved in the gluconeogenesis. Catalyzes stereospecifically the conversion of dihydroxyacetone phosphate (DHAP) to D-glyceraldehyde-3-phosphate (G3P). In Bacillus cereus (strain B4264), this protein is Triosephosphate isomerase.